Consider the following 79-residue polypeptide: Probable [Fe-S]-dependent transcriptional repressor (79 aa).

Cys-56, Cys-61, Cys-64, and Cys-71 together coordinate iron-sulfur cluster.

Belongs to the FeoC family.

In terms of biological role, may function as a transcriptional regulator that controls feoABC expression. The polypeptide is Probable [Fe-S]-dependent transcriptional repressor (Klebsiella pneumoniae (strain 342)).